Reading from the N-terminus, the 198-residue chain is Glycerol-3-phosphate acyltransferase (198 aa).

5 consecutive transmembrane segments (helical) span residues 5 to 25 (LILL…LWIG), 56 to 76 (SIVT…PFFF), 84 to 104 (FWLL…FAGF), 114 to 134 (AGVI…IFLL), and 158 to 178 (LFMG…FVVW).

The protein belongs to the PlsY family. Probably interacts with PlsX.

Its subcellular location is the cell membrane. It carries out the reaction an acyl phosphate + sn-glycerol 3-phosphate = a 1-acyl-sn-glycero-3-phosphate + phosphate. The protein operates within lipid metabolism; phospholipid metabolism. Catalyzes the transfer of an acyl group from acyl-phosphate (acyl-PO(4)) to glycerol-3-phosphate (G3P) to form lysophosphatidic acid (LPA). This enzyme utilizes acyl-phosphate as fatty acyl donor, but not acyl-CoA or acyl-ACP. The protein is Glycerol-3-phosphate acyltransferase of Listeria welshimeri serovar 6b (strain ATCC 35897 / DSM 20650 / CCUG 15529 / CIP 8149 / NCTC 11857 / SLCC 5334 / V8).